Consider the following 168-residue polypeptide: Peptide deformylase (168 aa).

Fe cation is bound by residues Cys-91 and His-133. Glu-134 is an active-site residue. His-137 lines the Fe cation pocket.

The protein belongs to the polypeptide deformylase family. It depends on Fe(2+) as a cofactor.

It carries out the reaction N-terminal N-formyl-L-methionyl-[peptide] + H2O = N-terminal L-methionyl-[peptide] + formate. Its function is as follows. Removes the formyl group from the N-terminal Met of newly synthesized proteins. Requires at least a dipeptide for an efficient rate of reaction. N-terminal L-methionine is a prerequisite for activity but the enzyme has broad specificity at other positions. This is Peptide deformylase from Endomicrobium trichonymphae.